Reading from the N-terminus, the 178-residue chain is Twist-related protein (178 aa).

The region spanning 20 to 71 (QQRACANRRERQRTKELNDAFTLLRKLIPSMPSDKMSKIHTLRIATDYISFL) is the bHLH domain.

Efficient DNA binding requires dimerization with another bHLH protein. Homodimer. Forms a heterodimer with hlh-2. As to expression, expressed in defecation-associated muscles and neuron-like cells in the head at the L1 stage. In later larvae, expressed in SM cells and their descendants. Not expressed in differentiated body wall or sex muscles.

It localises to the nucleus. Acts as a transcriptional regulator. Involved in postembryonic mesodermal cell fate specification. Activates ceh-24 and egl-15 during mesodermal patterning. The protein is Twist-related protein (hlh-8) of Caenorhabditis elegans.